The chain runs to 57 residues: U-Asilidin(1)-Mar2a (57 aa).

The N-terminal stretch at 1–24 (MAPLLKLNILLLIVLICFTFHANA) is a signal peptide. Disulfide bonds link Cys28-Cys44, Cys35-Cys48, and Cys43-Cys53.

Belongs to the asilidin-1 family. Expressed by the venom gland. Exclusively expressed in the venom thoracic glands (and not in body tissues).

It is found in the secreted. In terms of biological role, may act as a neurotoxin. The chain is U-Asilidin(1)-Mar2a from Machimus arthriticus (Breck robberfly).